A 425-amino-acid polypeptide reads, in one-letter code: Glutamyl-tRNA reductase (425 aa).

Residues Thr-49 to Arg-52, Ser-109, Glu-114 to Gln-116, and Gln-120 each bind substrate. Cys-50 (nucleophile) is an active-site residue. Gly-189–Gly-194 is a binding site for NADP(+).

It belongs to the glutamyl-tRNA reductase family. In terms of assembly, homodimer.

The enzyme catalyses (S)-4-amino-5-oxopentanoate + tRNA(Glu) + NADP(+) = L-glutamyl-tRNA(Glu) + NADPH + H(+). It participates in porphyrin-containing compound metabolism; protoporphyrin-IX biosynthesis; 5-aminolevulinate from L-glutamyl-tRNA(Glu): step 1/2. The protein operates within porphyrin-containing compound metabolism; chlorophyll biosynthesis. Catalyzes the NADPH-dependent reduction of glutamyl-tRNA(Glu) to glutamate 1-semialdehyde (GSA). This is Glutamyl-tRNA reductase from Pelodictyon phaeoclathratiforme (strain DSM 5477 / BU-1).